The chain runs to 390 residues: Glucose-fructose oxidoreductase domain-containing protein 1 (390 aa).

An N-terminal signal peptide occupies residues 1 to 21; the sequence is MLPGVGVFGTSLTSRVIIPLL. N-linked (GlcNAc...) asparagine glycosylation is found at Asn161, Asn270, and Asn354.

It belongs to the Gfo/Idh/MocA family. Homodimer.

It localises to the secreted. Probably catalytically inactive enzyme. Does not bind NAD or NADP. In Xenopus tropicalis (Western clawed frog), this protein is Glucose-fructose oxidoreductase domain-containing protein 1 (gfod1).